The primary structure comprises 542 residues: Malolactic enzyme (542 aa).

Residue Tyr-92 is the Proton donor of the active site. The active-site Proton acceptor is Lys-165. Lys-165 lines the substrate pocket. Mn(2+) contacts are provided by Glu-236, Asp-237, and Asp-260. Residues 293-296 (AGTA), Asn-405, and Asn-450 each bind NAD(+). Asn-450 serves as a coordination point for substrate.

It belongs to the malic enzymes family. Homodimer. The cofactor is Mn(2+). It depends on NAD(+) as a cofactor.

The catalysed reaction is (S)-malate + H(+) = (S)-lactate + CO2. Oxamate, fructose-1,6-diphosphate and L-lactate act as non-competitive inhibitors, whereas succinate, citrate and tartrate isomers produce a competitive inhibition. Functionally, involved in the malolactic fermentation (MLF) of wine, which results in a natural decrease in acidity and favorable changes in wine flavors. Catalyzes the decarboxylation of L-malate to L-lactate. The chain is Malolactic enzyme (mleS) from Leuconostoc mesenteroides.